The chain runs to 158 residues: C-type lectin lectoxin-Enh7 (158 aa).

The N-terminal stretch at 1–23 (MGQFTVVSLGLLAVFLSLSGAKG) is a signal peptide. Cystine bridges form between Cys-26–Cys-37, Cys-54–Cys-154, and Cys-129–Cys-146. Residues 33–155 (RNGVCNKLFP…CASLHPFICQ (123 aa)) enclose the C-type lectin domain. A Mannose-binding motif is present at residues 119-121 (EPN). The Ca(2+) site is built by Glu-127, Asn-142, and Asp-143.

It belongs to the true venom lectin family. In terms of tissue distribution, expressed by the venom gland.

The protein localises to the secreted. Its function is as follows. Mannose-binding lectin which recognizes specific carbohydrate structures and agglutinates a variety of animal cells by binding to cell-surface glycoproteins and glycolipids. May be a calcium-dependent lectin. The polypeptide is C-type lectin lectoxin-Enh7 (Pseudoferania polylepis (Macleay's water snake)).